We begin with the raw amino-acid sequence, 265 residues long: 3-methyl-2-oxobutanoate hydroxymethyltransferase (265 aa).

Mg(2+) is bound by residues Asp-41 and Asp-80. 3-methyl-2-oxobutanoate is bound by residues Asp-41 to Ser-42, Asp-80, and Lys-109. Position 111 (Glu-111) interacts with Mg(2+). Catalysis depends on Glu-178, which acts as the Proton acceptor.

This sequence belongs to the PanB family. Homodecamer; pentamer of dimers. Mg(2+) is required as a cofactor.

Its subcellular location is the cytoplasm. It carries out the reaction 3-methyl-2-oxobutanoate + (6R)-5,10-methylene-5,6,7,8-tetrahydrofolate + H2O = 2-dehydropantoate + (6S)-5,6,7,8-tetrahydrofolate. The protein operates within cofactor biosynthesis; (R)-pantothenate biosynthesis; (R)-pantoate from 3-methyl-2-oxobutanoate: step 1/2. In terms of biological role, catalyzes the reversible reaction in which hydroxymethyl group from 5,10-methylenetetrahydrofolate is transferred onto alpha-ketoisovalerate to form ketopantoate. This chain is 3-methyl-2-oxobutanoate hydroxymethyltransferase, found in Thermosipho africanus (strain TCF52B).